Here is a 536-residue protein sequence, read N- to C-terminus: Glycine--tRNA ligase (536 aa).

Residues 56–67 (LVSPAGAPSTFE) are insert. Substrate contacts are provided by Arg106 and Glu213. ATP contacts are provided by residues 245–247 (RNE), 255–260 (FRSREF), and 333–334 (EL). Residue 260–264 (FEQME) coordinates substrate. An insert region spans residues 350-372 (EGKLDPATNPMTVELNEHGKPKH). Substrate is bound at residue 396-400 (EPSAG). 400–403 (GADR) serves as a coordination point for ATP.

Belongs to the class-II aminoacyl-tRNA synthetase family. Homodimer.

The protein resides in the cytoplasm. It carries out the reaction tRNA(Gly) + glycine + ATP = glycyl-tRNA(Gly) + AMP + diphosphate. Its function is as follows. Catalyzes the attachment of glycine to tRNA(Gly). The protein is Glycine--tRNA ligase of Rhodopirellula baltica (strain DSM 10527 / NCIMB 13988 / SH1).